The primary structure comprises 82 residues: KKEKEQGCYEDFIECLKLYDKEENGTMLLAELQHALLALGENLDDEQVETLFADCMDPEDDEGFIPYSQFVQRLMSDPVVFD.

The 36-residue stretch at 7 to 42 (GCYEDFIECLKLYDKEENGTMLLAELQHALLALGEN) folds into the EF-hand domain.

In terms of assembly, myosin is a hexamer of 2 heavy chains and 4 light chains.

The chain is Myosin light chain alkali (Mlc1) from Drosophila teissieri (Fruit fly).